Consider the following 121-residue polypeptide: Cysteine-rich neurotrophic factor (121 aa).

Positions Met1–Ala18 are cleaved as a signal peptide. Asn57 carries an N-linked (GlcNAc...) asparagine glycan.

It localises to the secreted. In terms of biological role, interacts with the p75 low-affinity neurotrophin receptor. Evokes neurite outgrowth and modulated calcium currents in pedal motor neurons. May be involved in target-derived trophic support for motor neurons. This chain is Cysteine-rich neurotrophic factor, found in Lymnaea stagnalis (Great pond snail).